We begin with the raw amino-acid sequence, 94 residues long: Integration host factor subunit beta (94 aa).

Belongs to the bacterial histone-like protein family. As to quaternary structure, heterodimer of an alpha and a beta chain.

This protein is one of the two subunits of integration host factor, a specific DNA-binding protein that functions in genetic recombination as well as in transcriptional and translational control. This chain is Integration host factor subunit beta, found in Histophilus somni (strain 129Pt) (Haemophilus somnus).